The primary structure comprises 584 residues: Mitochondrial ribonuclease P catalytic subunit (584 aa).

The transit peptide at 1-43 (MTFYLSGFRSIPKLWKSNPYFELGPATSSTPFFLCAIGNQQRW) directs the protein to the mitochondrion. One can recognise a PRORP domain in the interval 339 to 575 (IQKSGQCSGC…SCEVPTKWLC (237 aa)). 2 residues coordinate Zn(2+): cysteine 345 and cysteine 348. Mg(2+)-binding residues include aspartate 406, aspartate 475, aspartate 476, and aspartate 496. Residues histidine 554 and cysteine 575 each coordinate Zn(2+).

Belongs to the PPR family. P subfamily. As to quaternary structure, catalytic component of mitochondrial ribonuclease P, a complex composed of TRMT10C/MRPP1, HSD17B10/MRPP2 and PRORP/MRPP3. Mg(2+) serves as cofactor. It depends on Mn(2+) as a cofactor. In terms of processing, degraded by LONP1 following mitochondrial unfolded protein response, probably leading to inhibit translation in mitochondrion. Detected, after the onset of hearing, in the organ of Corti around the afferent and efferent synapses of the inner hair cells and the efferent synapses of the outer hair cells.

It localises to the mitochondrion. It carries out the reaction Endonucleolytic cleavage of RNA, removing 5'-extranucleotides from tRNA precursor.. Functionally, catalytic ribonuclease component of mitochondrial ribonuclease P, a complex composed of TRMT10C/MRPP1, HSD17B10/MRPP2 and PRORP, which cleaves tRNA molecules in their 5'-ends. The presence of TRMT10C/MRPP1, HSD17B10/MRPP2 is required to catalyze tRNA molecules in their 5'-ends. This is Mitochondrial ribonuclease P catalytic subunit (Prorp) from Mus musculus (Mouse).